Here is a 202-residue protein sequence, read N- to C-terminus: Urease accessory protein UreE (202 aa).

The tract at residues 138–202 (RGAYHSHGGH…HGHHHGHKHD (65 aa)) is disordered. Over residues 147–193 (HSHDHGHAAHDHGHAAHDHGHNHDHDHGHAHGHDHQHDHNCDHDHDH) the composition is skewed to basic and acidic residues.

It belongs to the UreE family.

The protein localises to the cytoplasm. Involved in urease metallocenter assembly. Binds nickel. Probably functions as a nickel donor during metallocenter assembly. In Rhizobium etli (strain CIAT 652), this protein is Urease accessory protein UreE.